Here is a 140-residue protein sequence, read N- to C-terminus: uncharacterized protein (140 aa).

Transmembrane regions (helical) follow at residues 4-24 (LLLA…SFSG), 56-76 (EAFI…YLLW), 84-104 (SAAA…LFFS), and 109-129 (IRDV…YVLA).

The protein localises to the cell membrane. Its function is as follows. May be important for peptidoglycan remodeling. This is an uncharacterized protein from Bacillus subtilis (strain 168).